Here is a 243-residue protein sequence, read N- to C-terminus: MTDTPDTPDTPMATGASSRPPLRALTPLEGRVVAVLLEKQFTVPDTYPLSLNALAAGCNQKTARSPVMSVGEDEILTAIDGLKSLSLVFEGSSSRVPRFEQNLARVLGVPSQSAALLSTLLLRGPQTAAELRLNTARLHAFADISSVEAFLDELAERDPALVVKLPRGPGEREHRWTHLLCGEVSLAEAPGLRTSASIEIAPSELEALRISHRELEDKVARLQALVEEMAEQLGISIDPDRLS.

The segment covering 1–11 (MTDTPDTPDTP) has biased composition (low complexity). The disordered stretch occupies residues 1–23 (MTDTPDTPDTPMATGASSRPPLR).

The protein belongs to the UPF0502 family.

In Cupriavidus metallidurans (strain ATCC 43123 / DSM 2839 / NBRC 102507 / CH34) (Ralstonia metallidurans), this protein is UPF0502 protein Rmet_3697.